Reading from the N-terminus, the 337-residue chain is Follistatin (337 aa).

An N-terminal signal peptide occupies residues P1 to A22. The region spanning G23 to G96 is the TB domain. Intrachain disulfides connect C25–C48, C35–C81, C49–C84, C88–C99, C93–C109, C111–C143, C115–C136, C125–C157, C161–C172, C166–C182, C185–C218, C189–C211, C200–C232, C238–C249, C243–C260, C263–C295, C267–C288, and C277–C309. Positions T87–V110 constitute a Follistatin-like 1 domain. Positions N105–K159 constitute a Kazal-like 1 domain. N117 carries N-linked (GlcNAc...) asparagine glycosylation. Positions T160–V183 constitute a Follistatin-like 2 domain. The 56-residue stretch at N179–K234 folds into the Kazal-like 2 domain. The Follistatin-like 3 domain maps to S237 to S261. A Kazal-like 3 domain is found at K254–S311. A glycan (N-linked (GlcNAc...) asparagine) is linked at N281. A disordered region spans residues C309–W337. A compositionally biased stretch (acidic residues) spans E314–D326.

In terms of assembly, monomer.

The protein resides in the secreted. In terms of biological role, binds directly to activin and functions as an activin antagonist. Specific inhibitor of the biosynthesis and secretion of pituitary follicle stimulating hormone (FSH). This is Follistatin from Ovis aries (Sheep).